We begin with the raw amino-acid sequence, 1011 residues long: Poly [ADP-ribose] polymerase 1 (1011 aa).

2 PARP-type zinc fingers span residues 9–91 (YRAE…ETGA) and 113–203 (FAAE…PATK). Zn(2+)-binding residues include C21, C24, H53, C56, C125, C128, H159, and C162. The tract at residues 198-235 (QLPATKTEGKRKGEEVDGNVVAKKKSRKEKEKESKQEK) is disordered. Short sequence motifs (nuclear localization signal) lie at residues 207 to 209 (KRK) and 220 to 225 (KKKSRK). The 135-residue stretch at 224–358 (RKEKEKESKQ…CKKQDRIFPP (135 aa)) folds into the PADR1 zinc-binding domain. Residues 225–235 (KEKEKESKQEK) show a composition bias toward basic and acidic residues. Positions 289–331 (GALLPCEECKGQFVFKSDAYYCSGDITAWTKCVAKTQTPNRKD) are zinc ribbon. Residues C294, C297, C310, and C320 each contribute to the Zn(2+) site. Residues 359–378 (EAATVNSAPPPPASAPLTET) are disordered. The tract at residues 371–522 (ASAPLTETVT…PSKSEKKMKL (152 aa)) is automodification domain. Positions 382 to 473 (PQDKPLTNMK…KGFQELLSLH (92 aa)) constitute a BRCT domain. E403, E404, E410, E411, E432, E434, E441, E442, E453, E454, E468, E481, E485, E488, E509, E510, and E517 each carry polyADP-ribosyl glutamic acid. Residues 496 to 519 (SKPANMKSAGKVKEEQGPSKSEKK) are disordered. A compositionally biased stretch (basic and acidic residues) spans 506 to 519 (KVKEEQGPSKSEKK). Residues 539 to 635 (SAHVFEKGGK…KNFTKYPKKF (97 aa)) form the WGR domain. The region spanning 659–776 (KSKLAKPIQD…DIEVAYSLLR (118 aa)) is the PARP alpha-helical domain. Residues 785 to 1011 (DPIDINYEKL…LKFNYKTSLW (227 aa)) form the PARP catalytic domain. NAD(+)-binding positions include 859 to 861 (HGS), G868, R875, and S901. E985 acts as the For poly [ADP-ribose] polymerase activity in catalysis.

It belongs to the ARTD/PARP family. Homodimer; PARP-type zinc-fingers from separate parp1 molecules form a dimer module that specifically recognizes DNA strand breaks. Post-translationally, poly-ADP-ribosylated on serine, glutamate and aspartate residues by autocatalysis. Auto-ADP-ribosylation on serine takes place following interaction with HPF1. Auto poly-ADP-ribosylation on serine residues promotes its dissociation from chromatin.

It localises to the chromosome. The protein localises to the nucleus. The protein resides in the nucleolus. Its subcellular location is the cytoplasm. It is found in the cytosol. It carries out the reaction NAD(+) + (ADP-D-ribosyl)n-acceptor = nicotinamide + (ADP-D-ribosyl)n+1-acceptor + H(+).. The enzyme catalyses L-seryl-[protein] + NAD(+) = O-(ADP-D-ribosyl)-L-seryl-[protein] + nicotinamide + H(+). The catalysed reaction is L-aspartyl-[protein] + NAD(+) = 4-O-(ADP-D-ribosyl)-L-aspartyl-[protein] + nicotinamide. It catalyses the reaction L-glutamyl-[protein] + NAD(+) = 5-O-(ADP-D-ribosyl)-L-glutamyl-[protein] + nicotinamide. It carries out the reaction L-tyrosyl-[protein] + NAD(+) = O-(ADP-D-ribosyl)-L-tyrosyl-[protein] + nicotinamide + H(+). The enzyme catalyses L-histidyl-[protein] + NAD(+) = N(tele)-(ADP-D-ribosyl)-L-histidyl-[protein] + nicotinamide + H(+). ADP-ribosyltransferase activity is regulated via an allosteric activation mechanism. In absence of activation signal, parp1 is autoinhibited by the PARP alpha-helical domain (also named HD region), which prevents effective NAD(+)-binding. Activity is highly stimulated by signals, such as DNA strand breaks. Binding to damaged DNA unfolds the PARP alpha-helical domain, relieving autoinhibition. Poly-ADP-ribosyltransferase activity is tightly regulated and parp1 is removed from damaged chromatin following initial poly-ADP-ribosylation of chromatin to avoid prolonged residence (trapping) that has cytotoxic consequences. A number of factors or post-translational modifications (auto-poly-ADP-ribosylation) promote parp1 removal from chromatin. In terms of biological role, poly-ADP-ribosyltransferase that mediates poly-ADP-ribosylation of proteins and plays a key role in DNA repair. Mediates glutamate, aspartate, serine, histidine or tyrosine ADP-ribosylation of proteins: the ADP-D-ribosyl group of NAD(+) is transferred to the acceptor carboxyl group of target residues and further ADP-ribosyl groups are transferred to the 2'-position of the terminal adenosine moiety, building up a polymer with an average chain length of 20-30 units. Serine ADP-ribosylation of proteins constitutes the primary form of ADP-ribosylation of proteins in response to DNA damage. Specificity for the different amino acids is conferred by interacting factors, such as hpf1 and nmnat1. Following interaction with hpf1, catalyzes serine ADP-ribosylation of target proteins; hpf1 confers serine specificity by completing the parp1 active site. Also catalyzes tyrosine ADP-ribosylation of target proteins following interaction with hpf1. Following interaction with nmnat1, catalyzes glutamate and aspartate ADP-ribosylation of target proteins; nmnat1 confers glutamate and aspartate specificity. Parp1 initiates the repair of DNA breaks: recognizes and binds DNA breaks within chromatin and recruits hpf1, licensing serine ADP-ribosylation of target proteins, such as histones (H2BS6ADPr and H3S10ADPr), thereby promoting decompaction of chromatin and the recruitment of repair factors leading to the reparation of DNA strand breaks. In addition to base excision repair (BER) pathway, also involved in double-strand breaks (DSBs) repair. Mediates the poly-ADP-ribosylation of a number of proteins. In addition to proteins, also able to ADP-ribosylate DNA: catalyzes ADP-ribosylation of DNA strand break termini containing terminal phosphates and a 2'-OH group in single- and double-stranded DNA, respectively. Parp1-mediated DNA repair in neurons plays a role in sleep: senses DNA damage in neurons and promotes sleep, facilitating efficient DNA repair. In addition to DNA repair, also involved in other processes, such as transcription regulation, programmed cell death, membrane repair, adipogenesis and innate immunity. Acts as a repressor of transcription: binds to nucleosomes and modulates chromatin structure in a manner similar to histone H1, thereby altering RNA polymerase II. Acts both as a positive and negative regulator of transcription elongation, depending on the context. Poly-ADP-ribose chains generated by parp1 also play a role in poly-ADP-ribose-dependent cell death, a process named parthanatos. Also acts as a negative regulator of the cGAS-STING pathway by mediating poly-ADP-ribosylation and inactivation of cgas. Acts as a negative regulator of adipogenesis by catalyzing poly ADP-ribosylation of histone H2B on 'Glu-35' (H2BE35ADPr). The sequence is that of Poly [ADP-ribose] polymerase 1 (PARP1) from Gallus gallus (Chicken).